Reading from the N-terminus, the 191-residue chain is Cell division protein SepF (191 aa).

Residues 151–165 show a composition bias toward low complexity; the sequence is SSSPEEASPSSVPTE. The disordered stretch occupies residues 151-191; that stretch reads SSSPEEASPSSVPTENTPQYSLGKNTTPEPAWGNSKLSAYS. Polar residues predominate over residues 166-178; it reads NTPQYSLGKNTTP.

The protein belongs to the SepF family. In terms of assembly, homodimer. Interacts with FtsZ.

Its subcellular location is the cytoplasm. Its function is as follows. Cell division protein that is part of the divisome complex and is recruited early to the Z-ring. Probably stimulates Z-ring formation, perhaps through the cross-linking of FtsZ protofilaments. Its function overlaps with FtsA. The sequence is that of Cell division protein SepF from Prochlorococcus marinus (strain MIT 9215).